A 273-amino-acid polypeptide reads, in one-letter code: Undecaprenyl-diphosphatase (273 aa).

The next 9 helical transmembrane spans lie at 1-21, 39-59, 63-83, 92-112, 118-138, 165-185, 195-215, 225-245, and 252-272; these read MEPI…FLPV, PALF…LIVF, LGMM…GIAP, LKLA…GLGL, LFFS…LLWL, GLAV…GLFL, FSFL…AVDL, ATVL…KVLI, and RFYL…WIGM.

It belongs to the UppP family.

The protein localises to the cell inner membrane. The catalysed reaction is di-trans,octa-cis-undecaprenyl diphosphate + H2O = di-trans,octa-cis-undecaprenyl phosphate + phosphate + H(+). Catalyzes the dephosphorylation of undecaprenyl diphosphate (UPP). Confers resistance to bacitracin. This Desulfosudis oleivorans (strain DSM 6200 / JCM 39069 / Hxd3) (Desulfococcus oleovorans) protein is Undecaprenyl-diphosphatase.